Reading from the N-terminus, the 532-residue chain is Flavin-containing monooxygenase 1 (532 aa).

Ala2 is modified (N-acetylalanine). Residues 2-510 (AKRVAIVGAG…TRIVKESPSP (509 aa)) lie on the Lumenal side of the membrane. Residues 9–13 (GAGVS), Glu32, 40–41 (LW), and 61–62 (NS) each bind FAD. 60–61 (SN) is a binding site for NADP(+). Residue Asn120 is glycosylated (N-linked (GlcNAc...) (high mannose) asparagine). 195-198 (SGTD) serves as a coordination point for NADP(+). The helical transmembrane segment at 511–531 (FASLLKLFSFLALLVAIFQIF) threads the bilayer. Leu532 is a topological domain (cytoplasmic).

This sequence belongs to the FMO family. The cofactor is FAD. As to expression, liver.

The protein resides in the endoplasmic reticulum membrane. The catalysed reaction is hypotaurine + NADPH + O2 + H(+) = taurine + NADP(+) + H2O. It catalyses the reaction hypotaurine + NADH + O2 + H(+) = taurine + NAD(+) + H2O. The enzyme catalyses trimethylamine + NADPH + O2 = trimethylamine N-oxide + NADP(+) + H2O. It carries out the reaction N,N-dimethylaniline + NADPH + O2 + H(+) = N,N-dimethylaniline N-oxide + NADP(+) + H2O. Broad spectrum monooxygenase that catalyzes the oxygenation of a wide variety of nitrogen- and sulfur-containing compounds including xenobiotics. Catalyzes the S-oxygenation of hypotaurine to produce taurine, an organic osmolyte involved in cell volume regulation as well as a variety of cytoprotective and developmental processes. In vitro, catalyzes the N-oxygenation of trimethylamine (TMA) to produce trimethylamine N-oxide (TMAO) and could therefore participate to the detoxification of this compound that is generated by the action of gut microbiota from dietary precursors such as choline, choline containing compounds, betaine or L-carnitine. In Sus scrofa (Pig), this protein is Flavin-containing monooxygenase 1 (FMO1).